The following is a 166-amino-acid chain: ATP synthase subunit b (166 aa).

A helical transmembrane segment spans residues 15–37 (TLYYLLIFAALLLLVKHFAWGPV).

The protein belongs to the ATPase B chain family. In terms of assembly, F-type ATPases have 2 components, F(1) - the catalytic core - and F(0) - the membrane proton channel. F(1) has five subunits: alpha(3), beta(3), gamma(1), delta(1), epsilon(1). F(0) has three main subunits: a(1), b(2) and c(10-14). The alpha and beta chains form an alternating ring which encloses part of the gamma chain. F(1) is attached to F(0) by a central stalk formed by the gamma and epsilon chains, while a peripheral stalk is formed by the delta and b chains.

The protein resides in the cell membrane. In terms of biological role, f(1)F(0) ATP synthase produces ATP from ADP in the presence of a proton or sodium gradient. F-type ATPases consist of two structural domains, F(1) containing the extramembraneous catalytic core and F(0) containing the membrane proton channel, linked together by a central stalk and a peripheral stalk. During catalysis, ATP synthesis in the catalytic domain of F(1) is coupled via a rotary mechanism of the central stalk subunits to proton translocation. Functionally, component of the F(0) channel, it forms part of the peripheral stalk, linking F(1) to F(0). The protein is ATP synthase subunit b of Lactobacillus johnsonii (strain CNCM I-12250 / La1 / NCC 533).